The chain runs to 492 residues: Protein nucleotidyltransferase YdiU (492 aa).

ATP-binding residues include Gly-91, Gly-93, Arg-94, Lys-114, Asp-126, Gly-127, Arg-177, and Arg-184. Catalysis depends on Asp-253, which acts as the Proton acceptor. The Mg(2+) site is built by Asn-254 and Asp-263. Asp-263 provides a ligand contact to ATP.

This sequence belongs to the SELO family. Requires Mg(2+) as cofactor. It depends on Mn(2+) as a cofactor.

The catalysed reaction is L-seryl-[protein] + ATP = 3-O-(5'-adenylyl)-L-seryl-[protein] + diphosphate. The enzyme catalyses L-threonyl-[protein] + ATP = 3-O-(5'-adenylyl)-L-threonyl-[protein] + diphosphate. It carries out the reaction L-tyrosyl-[protein] + ATP = O-(5'-adenylyl)-L-tyrosyl-[protein] + diphosphate. It catalyses the reaction L-histidyl-[protein] + UTP = N(tele)-(5'-uridylyl)-L-histidyl-[protein] + diphosphate. The catalysed reaction is L-seryl-[protein] + UTP = O-(5'-uridylyl)-L-seryl-[protein] + diphosphate. The enzyme catalyses L-tyrosyl-[protein] + UTP = O-(5'-uridylyl)-L-tyrosyl-[protein] + diphosphate. Nucleotidyltransferase involved in the post-translational modification of proteins. It can catalyze the addition of adenosine monophosphate (AMP) or uridine monophosphate (UMP) to a protein, resulting in modifications known as AMPylation and UMPylation. This chain is Protein nucleotidyltransferase YdiU, found in Maridesulfovibrio salexigens (strain ATCC 14822 / DSM 2638 / NCIMB 8403 / VKM B-1763) (Desulfovibrio salexigens).